Consider the following 491-residue polypeptide: Probable CtpA-like serine protease (491 aa).

Positions 1-22 (MSESKDTTEVNQEVNEKASSQS) are disordered. Polar residues predominate over residues 9 to 22 (EVNQEVNEKASSQS). A helical transmembrane segment spans residues 34-54 (FIIILIVTILVTAMIAVFATI). The 83-residue stretch at 119-201 (TKSFNEDVSG…TKVTLTIERG (83 aa)) folds into the PDZ domain. Catalysis depends on charge relay system residues S324, D335, and K349.

The protein belongs to the peptidase S41A family.

The protein resides in the cell membrane. This Staphylococcus saprophyticus subsp. saprophyticus (strain ATCC 15305 / DSM 20229 / NCIMB 8711 / NCTC 7292 / S-41) protein is Probable CtpA-like serine protease.